Here is a 202-residue protein sequence, read N- to C-terminus: Endoribonuclease YbeY (202 aa).

The Zn(2+) site is built by His-120, His-124, and His-130.

Belongs to the endoribonuclease YbeY family. Zn(2+) serves as cofactor.

It is found in the cytoplasm. Functionally, single strand-specific metallo-endoribonuclease involved in late-stage 70S ribosome quality control and in maturation of the 3' terminus of the 16S rRNA. In Corynebacterium kroppenstedtii (strain DSM 44385 / JCM 11950 / CIP 105744 / CCUG 35717), this protein is Endoribonuclease YbeY.